The following is a 373-amino-acid chain: Putative glutamate--cysteine ligase 2-1 (373 aa).

Belongs to the glutamate--cysteine ligase type 2 family. YbdK subfamily.

The catalysed reaction is L-cysteine + L-glutamate + ATP = gamma-L-glutamyl-L-cysteine + ADP + phosphate + H(+). ATP-dependent carboxylate-amine ligase which exhibits weak glutamate--cysteine ligase activity. This Legionella pneumophila (strain Paris) protein is Putative glutamate--cysteine ligase 2-1.